Reading from the N-terminus, the 554-residue chain is Glucose-6-phosphate isomerase (554 aa).

The Proton donor role is filled by Glu-359. Residues His-390 and Lys-518 contribute to the active site.

This sequence belongs to the GPI family.

It is found in the cytoplasm. The enzyme catalyses alpha-D-glucose 6-phosphate = beta-D-fructose 6-phosphate. It participates in carbohydrate biosynthesis; gluconeogenesis. The protein operates within carbohydrate degradation; glycolysis; D-glyceraldehyde 3-phosphate and glycerone phosphate from D-glucose: step 2/4. Functionally, catalyzes the reversible isomerization of glucose-6-phosphate to fructose-6-phosphate. The sequence is that of Glucose-6-phosphate isomerase from Pseudomonas aeruginosa (strain LESB58).